A 215-amino-acid chain; its full sequence is Small ribosomal subunit protein uS5 (215 aa).

Positions 1-12 (MSGTQRRGGGAG) are enriched in gly residues. The segment at 1–31 (MSGTQRRGGGAGGERRGRDNRRGQNDRNRNQ) is disordered. The segment covering 13–31 (GERRGRDNRRGQNDRNRNQ) has biased composition (basic and acidic residues). The 64-residue stretch at 34 to 97 (YLERVVAINR…EEAKKHFFKV (64 aa)) folds into the S5 DRBM domain.

The protein belongs to the universal ribosomal protein uS5 family. As to quaternary structure, part of the 30S ribosomal subunit. Contacts proteins S4 and S8.

In terms of biological role, with S4 and S12 plays an important role in translational accuracy. Functionally, located at the back of the 30S subunit body where it stabilizes the conformation of the head with respect to the body. In Cutibacterium acnes (strain DSM 16379 / KPA171202) (Propionibacterium acnes), this protein is Small ribosomal subunit protein uS5.